We begin with the raw amino-acid sequence, 304 residues long: L-lactate dehydrogenase (304 aa).

NAD(+)-binding positions include Val11, Asp32, Arg37, and Gly76–Ala77. Substrate is bound by residues Gln79, Arg85, and Asn117–Asp120. Ser138 contacts NAD(+). Asp143 to Arg146 serves as a coordination point for substrate. 2 residues coordinate beta-D-fructose 1,6-bisphosphate: Arg148 and His163. His170 serves as the catalytic Proton acceptor. Thr225 contacts substrate.

Belongs to the LDH/MDH superfamily. LDH family. Homotetramer.

It localises to the cytoplasm. It carries out the reaction (S)-lactate + NAD(+) = pyruvate + NADH + H(+). Its pathway is fermentation; pyruvate fermentation to lactate; (S)-lactate from pyruvate: step 1/1. With respect to regulation, allosterically activated by fructose 1,6-bisphosphate (FBP). In terms of biological role, catalyzes the conversion of lactate to pyruvate. This is L-lactate dehydrogenase from Deinococcus radiodurans (strain ATCC 13939 / DSM 20539 / JCM 16871 / CCUG 27074 / LMG 4051 / NBRC 15346 / NCIMB 9279 / VKM B-1422 / R1).